The primary structure comprises 297 residues: Phosphatidylserine decarboxylase proenzyme (297 aa).

Residues D100, H157, and S263 each act as charge relay system; for autoendoproteolytic cleavage activity in the active site. S263 serves as the catalytic Schiff-base intermediate with substrate; via pyruvic acid; for decarboxylase activity. Residue S263 is modified to Pyruvic acid (Ser); by autocatalysis.

The protein belongs to the phosphatidylserine decarboxylase family. PSD-B subfamily. Prokaryotic type I sub-subfamily. Heterodimer of a large membrane-associated beta subunit and a small pyruvoyl-containing alpha subunit. Pyruvate is required as a cofactor. In terms of processing, is synthesized initially as an inactive proenzyme. Formation of the active enzyme involves a self-maturation process in which the active site pyruvoyl group is generated from an internal serine residue via an autocatalytic post-translational modification. Two non-identical subunits are generated from the proenzyme in this reaction, and the pyruvate is formed at the N-terminus of the alpha chain, which is derived from the carboxyl end of the proenzyme. The autoendoproteolytic cleavage occurs by a canonical serine protease mechanism, in which the side chain hydroxyl group of the serine supplies its oxygen atom to form the C-terminus of the beta chain, while the remainder of the serine residue undergoes an oxidative deamination to produce ammonia and the pyruvoyl prosthetic group on the alpha chain. During this reaction, the Ser that is part of the protease active site of the proenzyme becomes the pyruvoyl prosthetic group, which constitutes an essential element of the active site of the mature decarboxylase.

It is found in the cell membrane. The enzyme catalyses a 1,2-diacyl-sn-glycero-3-phospho-L-serine + H(+) = a 1,2-diacyl-sn-glycero-3-phosphoethanolamine + CO2. The protein operates within phospholipid metabolism; phosphatidylethanolamine biosynthesis; phosphatidylethanolamine from CDP-diacylglycerol: step 2/2. Catalyzes the formation of phosphatidylethanolamine (PtdEtn) from phosphatidylserine (PtdSer). The chain is Phosphatidylserine decarboxylase proenzyme from Haemophilus ducreyi (strain 35000HP / ATCC 700724).